The following is a 245-amino-acid chain: 14-3-3 protein theta (245 aa).

At Met1 the chain carries N-acetylmethionine. Residue Lys3 is modified to N6-acetyllysine. Lys49 is subject to N6-acetyllysine; alternate. Residue Lys49 forms a Glycyl lysine isopeptide (Lys-Gly) (interchain with G-Cter in SUMO2); alternate linkage. The residue at position 68 (Lys68) is an N6-acetyllysine. Tyr82 bears the 3'-nitrotyrosine mark. Residue Ser92 is modified to Phosphoserine. Tyr104 bears the 3'-nitrotyrosine mark. N6-acetyllysine is present on Lys115. Ser232 carries the post-translational modification Phosphoserine; by CK1.

This sequence belongs to the 14-3-3 family. Homodimer. Interacts with CDKN1B ('Thr-198' phosphorylated form); the interaction translocates CDKN1B to the cytoplasm. Interacts with SSH1. Interacts with GAB2. Interacts with RGS7 (phosphorylated form). Interacts with CDK16. Interacts with the 'Ser-241' phosphorylated form of PDPK1. Interacts with the 'Thr-369' phosphorylated form of DAPK2. Interacts with PI4KB, TBC1D22A and TBC1D22B. Interacts with SLITRK1. Interacts with RIPOR2. Interacts with INAVA; the interaction increases upon PRR (pattern recognition receptor) stimulation and is required for cellular signaling pathway activation and cytokine secretion. Interacts with MARK2, MARK3 and MARK4. Interacts with MEFV.

It localises to the cytoplasm. Adapter protein implicated in the regulation of a large spectrum of both general and specialized signaling pathways. Binds to a large number of partners, usually by recognition of a phosphoserine or phosphothreonine motif. Binding generally results in the modulation of the activity of the binding partner. Negatively regulates the kinase activity of PDPK1. This chain is 14-3-3 protein theta (Ywhaq), found in Mus musculus (Mouse).